The following is a 599-amino-acid chain: Putative clathrin assembly protein At1g03050 (599 aa).

The region spanning Gly26–Lys162 is the ENTH domain. Disordered regions lie at residues Lys332–Glu382 and Gln580–Tyr599. Acidic residues-rich tracts occupy residues Ala341–Asp359 and Glu373–Glu382. Residues Leu585–Tyr599 are compositionally biased toward polar residues.

Its subcellular location is the membrane. It localises to the clathrin-coated pit. The protein localises to the golgi apparatus. The protein resides in the cytoplasmic vesicle. It is found in the clathrin-coated vesicle. The chain is Putative clathrin assembly protein At1g03050 from Arabidopsis thaliana (Mouse-ear cress).